A 1323-amino-acid chain; its full sequence is ABC transporter C family member 12 (1323 aa).

In terms of domain architecture, ABC transmembrane type-1 1 spans 110 to 396 (HCISLFFYSI…LPILIALGIQ (287 aa)). 6 helical membrane-spanning segments follow: residues 111–131 (CISL…PEIL), 152–172 (MGYY…FCNY), 227–247 (VFGI…CLAL), 252–272 (IGWP…FNGL), 338–358 (ILIA…FSTY), and 375–395 (SYLN…ALGI). The 225-residue stretch at 428-652 (VYMKNSTTTW…KLEFASLLQE (225 aa)) folds into the ABC transporter 1 domain. Residue 464 to 471 (GSVGSGKS) participates in ATP binding. Residues 657-695 (ENTKGDDSDDDDDKKDDDKKEEKVEKPKQSDKDGTLISE) form a disordered region. The segment covering 672–690 (DDDKKEEKVEKPKQSDKDG) has biased composition (basic and acidic residues). 5 helical membrane passes run 712-732 (VTAG…LETG), 772-792 (IYIG…FSFF), 840-860 (LIAT…ATLI), 862-882 (ISII…LFFI), and 952-972 (WLGL…CIFI). The region spanning 720–1010 (FLFAMILFLL…GVLQAADTET (291 aa)) is the ABC transmembrane type-1 2 domain. The 235-residue stretch at 1047–1281 (IKFDNLVMRY…QNGLLTWLVN (235 aa)) folds into the ABC transporter 2 domain. 1081 to 1088 (GRTGAGKS) is an ATP binding site.

The protein belongs to the ABC transporter superfamily. ABCC family. Conjugate transporter (TC 3.A.1.208) subfamily.

The protein localises to the membrane. This Dictyostelium discoideum (Social amoeba) protein is ABC transporter C family member 12 (abcC12).